We begin with the raw amino-acid sequence, 441 residues long: Glutamate--tRNA ligase 2 (441 aa).

Positions 6-16 match the 'HIGH' region motif; the sequence is PSPTGDMHIGN. The 'KMSKS' region motif lies at 231 to 235; it reads KMSKR. Lys234 is an ATP binding site.

This sequence belongs to the class-I aminoacyl-tRNA synthetase family. Glutamate--tRNA ligase type 1 subfamily. As to quaternary structure, monomer.

Its subcellular location is the cytoplasm. It carries out the reaction tRNA(Glu) + L-glutamate + ATP = L-glutamyl-tRNA(Glu) + AMP + diphosphate. Functionally, catalyzes the attachment of glutamate to tRNA(Glu) in a two-step reaction: glutamate is first activated by ATP to form Glu-AMP and then transferred to the acceptor end of tRNA(Glu). This is Glutamate--tRNA ligase 2 from Helicobacter hepaticus (strain ATCC 51449 / 3B1).